The primary structure comprises 487 residues: 1-hydroxycarotenoid 3,4-desaturase (487 aa).

FAD-binding positions include Gly-12, Glu-31, Lys-39, 55-56, Val-247, Asn-275, Leu-431, Gly-461, and 468-469; these read SL and GI.

It belongs to the carotenoid/retinoid oxidoreductase family. As to quaternary structure, monomer.

The catalysed reaction is rhodopin + A = (3E)-3,4-didehydrorhodopin + AH2. It catalyses the reaction 1'-hydroxy-gamma-carotene + A = 1'-hydroxytorulene + AH2. The enzyme catalyses 1-hydroxy-all-trans-1,2-dihydro-neurosporene + A = demethylspheroidene + AH2. It carries out the reaction 1,1'-dihydroxy-1,1',2,2'-tetrahydroneurosporene + A = 1'-hydroxy-demethylspheroidene + AH2. The catalysed reaction is 1,1'-dihydroxy-1,1',2,2'-tetrahydrolycopene + A = 1,1'-dihydroxy-3,4-didehydro-1,2-dihydrolycopene + AH2. It functions in the pathway carotenoid biosynthesis. Catalyzes the introduction of a C-3,4 double bond into 1'-hydroxy-gamma-carotene and rhodopin (1-hydroxylycopene) to yield 1'-hydroxytorulene and (3E)-3,4-didehydrorhodopin, respectively. Can also use 1-hydroxy-all-trans-1,2-dihydro-neurosporene, 1,1'-dihydroxy-1,1',2,2'-tetrahydroneurosporene and 1,1'-dihydroxy-1,1',2,2'-tetrahydrolycopene. Probably involved in the synthesis of myxol, a gamma-carotene derivative. May use FAD as a proton acceptor. The polypeptide is 1-hydroxycarotenoid 3,4-desaturase (Nonlabens dokdonensis (strain DSM 17205 / KCTC 12402 / DSW-6) (Donghaeana dokdonensis)).